The sequence spans 327 residues: Annexin A8 (327 aa).

Annexin repeat units follow at residues 21–92, 93–164, 177–249, and 253–324; these read FNPD…ALMY, PPYS…CLLQ, GLVL…TVVK, and NVHS…NLVG. Ca(2+)-binding residues include M266, G268, G270, and D310.

The protein belongs to the annexin family.

In terms of biological role, this protein is an anticoagulant protein that acts as an indirect inhibitor of the thromboplastin-specific complex, which is involved in the blood coagulation cascade. In Mus musculus (Mouse), this protein is Annexin A8 (Anxa8).